Reading from the N-terminus, the 500-residue chain is L-arabinose isomerase (500 aa).

Mn(2+) is bound by residues Glu306, Glu333, His350, and His450.

Belongs to the arabinose isomerase family. As to quaternary structure, homohexamer. Requires Mn(2+) as cofactor.

The catalysed reaction is beta-L-arabinopyranose = L-ribulose. It functions in the pathway carbohydrate degradation; L-arabinose degradation via L-ribulose; D-xylulose 5-phosphate from L-arabinose (bacterial route): step 1/3. Catalyzes the conversion of L-arabinose to L-ribulose. The chain is L-arabinose isomerase from Yersinia pseudotuberculosis serotype O:3 (strain YPIII).